The sequence spans 467 residues: Cobyrinate a,c-diamide synthase (467 aa).

Positions Arg256 to Glu449 constitute a GATase cobBQ-type domain. Catalysis depends on Cys338, which acts as the Nucleophile.

Belongs to the CobB/CbiA family. Mg(2+) is required as a cofactor.

The enzyme catalyses cob(II)yrinate + 2 L-glutamine + 2 ATP + 2 H2O = cob(II)yrinate a,c diamide + 2 L-glutamate + 2 ADP + 2 phosphate + 2 H(+). Its pathway is cofactor biosynthesis; adenosylcobalamin biosynthesis; cob(II)yrinate a,c-diamide from sirohydrochlorin (anaerobic route): step 10/10. Functionally, catalyzes the ATP-dependent amidation of the two carboxylate groups at positions a and c of cobyrinate, using either L-glutamine or ammonia as the nitrogen source. This chain is Cobyrinate a,c-diamide synthase, found in Magnetococcus marinus (strain ATCC BAA-1437 / JCM 17883 / MC-1).